The following is a 397-amino-acid chain: 1-deoxy-D-xylulose 5-phosphate reductoisomerase (397 aa).

NADPH contacts are provided by Thr12, Gly13, Ser14, Ile15, Gly38, Lys39, Asn40, and Asn126. Residue Lys127 participates in 1-deoxy-D-xylulose 5-phosphate binding. Glu128 contacts NADPH. Asp152 lines the Mn(2+) pocket. 1-deoxy-D-xylulose 5-phosphate is bound by residues Ser153, Glu154, Ser188, and His211. Glu154 lines the Mn(2+) pocket. Gly217 serves as a coordination point for NADPH. The 1-deoxy-D-xylulose 5-phosphate site is built by Ser224, Asn229, Lys230, and Glu233. A Mn(2+)-binding site is contributed by Glu233.

It belongs to the DXR family. Mg(2+) serves as cofactor. The cofactor is Mn(2+).

It catalyses the reaction 2-C-methyl-D-erythritol 4-phosphate + NADP(+) = 1-deoxy-D-xylulose 5-phosphate + NADPH + H(+). The protein operates within isoprenoid biosynthesis; isopentenyl diphosphate biosynthesis via DXP pathway; isopentenyl diphosphate from 1-deoxy-D-xylulose 5-phosphate: step 1/6. Its function is as follows. Catalyzes the NADPH-dependent rearrangement and reduction of 1-deoxy-D-xylulose-5-phosphate (DXP) to 2-C-methyl-D-erythritol 4-phosphate (MEP). The sequence is that of 1-deoxy-D-xylulose 5-phosphate reductoisomerase from Haemophilus influenzae (strain PittEE).